The sequence spans 426 residues: D-tagatose-1,6-bisphosphate aldolase subunit KbaZ (426 aa).

Belongs to the GatZ/KbaZ family. KbaZ subfamily. In terms of assembly, forms a complex with KbaY.

The protein operates within carbohydrate metabolism; D-tagatose 6-phosphate degradation; D-glyceraldehyde 3-phosphate and glycerone phosphate from D-tagatose 6-phosphate: step 2/2. Functionally, component of the tagatose-1,6-bisphosphate aldolase KbaYZ that is required for full activity and stability of the Y subunit. Could have a chaperone-like function for the proper and stable folding of KbaY. When expressed alone, KbaZ does not show any aldolase activity. This chain is D-tagatose-1,6-bisphosphate aldolase subunit KbaZ, found in Escherichia coli O8 (strain IAI1).